Here is a 272-residue protein sequence, read N- to C-terminus: Phosphatidylglycerol--prolipoprotein diacylglyceryl transferase (272 aa).

Transmembrane regions (helical) follow at residues 17–37, 55–75, 90–110, 125–145, 174–194, 202–222, and 230–250; these read LQVH…WGLA, LVFY…VLFY, VWTG…AMLF, FIAP…FIGG, PSQI…LWWF, MAVS…MEFF, and GFIL…MLLI. A 1,2-diacyl-sn-glycero-3-phospho-(1'-sn-glycerol) is bound at residue Arg-138.

Belongs to the Lgt family.

Its subcellular location is the cell inner membrane. The catalysed reaction is L-cysteinyl-[prolipoprotein] + a 1,2-diacyl-sn-glycero-3-phospho-(1'-sn-glycerol) = an S-1,2-diacyl-sn-glyceryl-L-cysteinyl-[prolipoprotein] + sn-glycerol 1-phosphate + H(+). The protein operates within protein modification; lipoprotein biosynthesis (diacylglyceryl transfer). Its function is as follows. Catalyzes the transfer of the diacylglyceryl group from phosphatidylglycerol to the sulfhydryl group of the N-terminal cysteine of a prolipoprotein, the first step in the formation of mature lipoproteins. In Acinetobacter baumannii (strain SDF), this protein is Phosphatidylglycerol--prolipoprotein diacylglyceryl transferase.